The following is a 167-amino-acid chain: Sulfopyruvate decarboxylase subunit alpha (167 aa).

The protein belongs to the ComD family. Heterododecamer composed of 6 subunits alpha and 6 subunits beta.

The enzyme catalyses 3-sulfopyruvate + H(+) = sulfoacetaldehyde + CO2. The protein operates within cofactor biosynthesis; coenzyme M biosynthesis; sulfoacetaldehyde from phosphoenolpyruvate and sulfite: step 4/4. Functionally, involved in the biosynthesis of the coenzyme M (2-mercaptoethanesulfonic acid). Catalyzes the decarboxylation of sulfopyruvate to sulfoacetaldehyde. This chain is Sulfopyruvate decarboxylase subunit alpha (comD), found in Methanococcus maripaludis (strain DSM 14266 / JCM 13030 / NBRC 101832 / S2 / LL).